We begin with the raw amino-acid sequence, 353 residues long: Mitochondrial glutathione transporter SLC25A40 (353 aa).

3 Solcar repeats span residues 14–132 (ITPF…LFAL), 140–224 (RSDL…GKWW), and 234–328 (PTVA…GKAF). A run of 6 helical transmembrane segments spans residues 20–40 (MMAS…LDVV), 104–124 (LWSG…IYFT), 143–163 (LAPL…ISPL), 200–221 (WGPT…YEKG), 237–257 (AITF…TLPF), and 299–319 (GLFA…AIMI).

This sequence belongs to the mitochondrial carrier (TC 2.A.29) family.

It is found in the mitochondrion inner membrane. The catalysed reaction is glutathione(in) = glutathione(out). Its function is as follows. Probable mitochondrial transporter required for glutathione import into mitochondria. Glutathione, which plays key roles in oxidative metabolism, is produced exclusively in the cytosol and is imported in many organelles. Mitochondrial glutathione is required for the activity and stability of proteins containing iron-sulfur clusters. This chain is Mitochondrial glutathione transporter SLC25A40, found in Danio rerio (Zebrafish).